A 104-amino-acid polypeptide reads, in one-letter code: Flagellar hook-basal body complex protein FliE (104 aa).

This sequence belongs to the FliE family.

The protein resides in the bacterial flagellum basal body. The chain is Flagellar hook-basal body complex protein FliE from Escherichia coli O139:H28 (strain E24377A / ETEC).